Here is a 618-residue protein sequence, read N- to C-terminus: 1-deoxy-D-xylulose-5-phosphate synthase (618 aa).

Residues histidine 74 and 115-117 each bind thiamine diphosphate; that span reads GHS. Aspartate 146 lines the Mg(2+) pocket. Thiamine diphosphate-binding positions include 147–148, asparagine 175, tyrosine 286, and glutamate 366; that span reads GA. Asparagine 175 contributes to the Mg(2+) binding site.

This sequence belongs to the transketolase family. DXPS subfamily. As to quaternary structure, homodimer. Mg(2+) serves as cofactor. Thiamine diphosphate is required as a cofactor.

The catalysed reaction is D-glyceraldehyde 3-phosphate + pyruvate + H(+) = 1-deoxy-D-xylulose 5-phosphate + CO2. It functions in the pathway metabolic intermediate biosynthesis; 1-deoxy-D-xylulose 5-phosphate biosynthesis; 1-deoxy-D-xylulose 5-phosphate from D-glyceraldehyde 3-phosphate and pyruvate: step 1/1. In terms of biological role, catalyzes the acyloin condensation reaction between C atoms 2 and 3 of pyruvate and glyceraldehyde 3-phosphate to yield 1-deoxy-D-xylulose-5-phosphate (DXP). The protein is 1-deoxy-D-xylulose-5-phosphate synthase of Clostridium tetani (strain Massachusetts / E88).